The chain runs to 226 residues: MIILKQMYVHDGRKFEALTIRNYTETDIERLISLQEECFPPPFPQELLWSEDQLASHIKTFPEGALCALINGRIIGSMTALIVQFEPDSPDHTWAQATDNGSIKNHEPHGNTLYVVDISVSPHYRKLGIGKWLMNTMYELTVDKRLERLLGGGRIPLYYKYAHEISAVQYVEDVMEGRKNDPVLSFLLRCGRSPIRVVSNYLEDKESLNYGVLMEWKNVFYKKASC.

The N-acetyltransferase domain occupies 18–219 (LTIRNYTETD…YGVLMEWKNV (202 aa)).

The protein belongs to the acetyltransferase family.

This is an uncharacterized protein from Bacillus subtilis (strain 168).